Here is a 167-residue protein sequence, read N- to C-terminus: Transmembrane protein B169L (167 aa).

2 helical membrane passes run Asn-28–Cys-48 and Thr-60–Asn-80. N-linked (GlcNAc...) asparagine; by host glycosylation occurs at Asn-88.

The protein belongs to the asfivirus B169L family.

It localises to the host membrane. Its subcellular location is the virion. The sequence is that of Transmembrane protein B169L from African swine fever virus (isolate Tick/Malawi/Lil 20-1/1983) (ASFV).